The chain runs to 91 residues: Cell division topological specificity factor (91 aa).

The protein belongs to the MinE family.

Its function is as follows. Prevents the cell division inhibition by proteins MinC and MinD at internal division sites while permitting inhibition at polar sites. This ensures cell division at the proper site by restricting the formation of a division septum at the midpoint of the long axis of the cell. This chain is Cell division topological specificity factor, found in Chloroflexus aurantiacus (strain ATCC 29366 / DSM 635 / J-10-fl).